We begin with the raw amino-acid sequence, 209 residues long: Peptide methionine sulfoxide reductase MsrA (209 aa).

The active site involves cysteine 51.

It belongs to the MsrA Met sulfoxide reductase family.

It catalyses the reaction L-methionyl-[protein] + [thioredoxin]-disulfide + H2O = L-methionyl-(S)-S-oxide-[protein] + [thioredoxin]-dithiol. The enzyme catalyses [thioredoxin]-disulfide + L-methionine + H2O = L-methionine (S)-S-oxide + [thioredoxin]-dithiol. Has an important function as a repair enzyme for proteins that have been inactivated by oxidation. Catalyzes the reversible oxidation-reduction of methionine sulfoxide in proteins to methionine. This Vibrio vulnificus (strain CMCP6) protein is Peptide methionine sulfoxide reductase MsrA.